The primary structure comprises 673 residues: DNA ligase (673 aa).

Residues 34–38, 83–84, and Glu-116 each bind NAD(+); these read DAEYD and SL. Residue Lys-118 is the N6-AMP-lysine intermediate of the active site. Positions 139, 176, 293, and 317 each coordinate NAD(+). 4 residues coordinate Zn(2+): Cys-411, Cys-414, Cys-429, and Cys-435. A BRCT domain is found at 595–673; the sequence is NQQNPFFGKT…EDEFLKWVNS (79 aa).

The protein belongs to the NAD-dependent DNA ligase family. LigA subfamily. Mg(2+) is required as a cofactor. The cofactor is Mn(2+).

The catalysed reaction is NAD(+) + (deoxyribonucleotide)n-3'-hydroxyl + 5'-phospho-(deoxyribonucleotide)m = (deoxyribonucleotide)n+m + AMP + beta-nicotinamide D-nucleotide.. DNA ligase that catalyzes the formation of phosphodiester linkages between 5'-phosphoryl and 3'-hydroxyl groups in double-stranded DNA using NAD as a coenzyme and as the energy source for the reaction. It is essential for DNA replication and repair of damaged DNA. The sequence is that of DNA ligase from Legionella pneumophila subsp. pneumophila (strain Philadelphia 1 / ATCC 33152 / DSM 7513).